A 321-amino-acid polypeptide reads, in one-letter code: Cytochrome c biogenesis protein CcsA (321 aa).

7 consecutive transmembrane segments (helical) span residues 17 to 37, 43 to 63, 71 to 91, 143 to 163, 225 to 245, 258 to 273, and 286 to 306; these read IISI…IVGL, KGMI…WIYS, LYES…VPKI, MLLS…LLVI, VISL…VWAN, ETWA…IYLH, and AIVA…VNLL.

The protein belongs to the CcmF/CycK/Ccl1/NrfE/CcsA family. In terms of assembly, may interact with Ccs1.

It localises to the plastid. The protein resides in the chloroplast thylakoid membrane. Its function is as follows. Required during biogenesis of c-type cytochromes (cytochrome c6 and cytochrome f) at the step of heme attachment. The protein is Cytochrome c biogenesis protein CcsA of Liriodendron tulipifera (Tuliptree).